The sequence spans 557 residues: (-)-germacrene D synthase (557 aa).

Mg(2+) contacts are provided by aspartate 310, aspartate 314, and glutamate 462. Positions aspartate 310–aspartate 314 match the DDXXD motif motif.

It belongs to the terpene synthase family. Tpsa subfamily. Mg(2+) serves as cofactor. As to expression, expressed in flowers. Detected in stems, young leaves and tendrils.

Its subcellular location is the cytoplasm. The catalysed reaction is (2E,6E)-farnesyl diphosphate + H2O = (1E,4S,5E,7R)-germacra-1(10),5-dien-11-ol + diphosphate. It carries out the reaction (2E,6E)-farnesyl diphosphate = (-)-germacrene D + diphosphate. Its pathway is secondary metabolite biosynthesis; terpenoid biosynthesis. Involved in the biosynthesis of germacrene D. Can use farnesyl diphosphate as substrate, but not geranyl diphosphate or geranylgeranyl diphosphate. Produces mainly (-)-germacrene D along with gamma-cadinene. The sequence is that of (-)-germacrene D synthase from Vitis vinifera (Grape).